We begin with the raw amino-acid sequence, 124 residues long: Small ribosomal subunit protein uS13 (124 aa).

Positions 95-124 are disordered; the sequence is GLPVRGQRTKTNARTRKGPKRTIAGKKKAK.

This sequence belongs to the universal ribosomal protein uS13 family. Part of the 30S ribosomal subunit. Forms a loose heterodimer with protein S19. Forms two bridges to the 50S subunit in the 70S ribosome.

Its function is as follows. Located at the top of the head of the 30S subunit, it contacts several helices of the 16S rRNA. In the 70S ribosome it contacts the 23S rRNA (bridge B1a) and protein L5 of the 50S subunit (bridge B1b), connecting the 2 subunits; these bridges are implicated in subunit movement. Contacts the tRNAs in the A and P-sites. The chain is Small ribosomal subunit protein uS13 from Rhodococcus erythropolis (strain PR4 / NBRC 100887).